A 1253-amino-acid polypeptide reads, in one-letter code: Structural polyprotein (1253 aa).

Residues 37 to 71 (FQAQQMQQLISAVNALTMRQNAIAPARPPKPKKKK) are host transcription inhibition. Residues 58–109 (AIAPARPPKPKKKKTTKPKPKTQPKKINGKTQQQKKKDKQADKKKKKPGKRE) are disordered. The Nuclear localization signal signature appears at 64-105 (PPKPKKKKTTKPKPKTQPKKINGKTQQQKKKDKQADKKKKKP). Residues 65 to 107 (PKPKKKKTTKPKPKTQPKKINGKTQQQKKKDKQADKKKKKPGK) show a composition bias toward basic residues. The interval 87–120 (KTQQQKKKDKQADKKKKKPGKRERMCMKIENDCI) is binding to the viral RNA. Residues 105–119 (PGKRERMCMKIENDC) form a ribosome-binding region. A disulfide bond links Cys119 and Cys134. The Peptidase S3 domain occupies 119–267 (CIFEVKHEGK…RVTPEGSEEW (149 aa)). Residue His145 is the Charge relay system of the active site. Positions 150–160 (IDNADLAKLAF) match the Nuclear export signal motif. The tract at residues 161 to 166 (KKSSKY) is interaction with spike glycoprotein E2. The Charge relay system role is filled by Asp167. A dimerization of the capsid protein region spans residues 189-199 (PEGHYNWHHGA). Catalysis depends on Ser219, which acts as the Charge relay system. The interval 225 to 229 (DNKGR) is dimerization of the capsid protein. The Extracellular portion of the chain corresponds to 268-701 (SAPLITAMCV…YGLYPAATVS (434 aa)). 3 disulfide bridges follow: Cys276-Cys285, Cys290-Cys294, and Cys293-Cys325. The N-linked (GlcNAc...) asparagine; by host glycan is linked to Asn280. Asn327 carries an N-linked (GlcNAc...) asparagine; by host glycan. Intrachain disulfides connect Cys352-Cys458, Cys355-Cys361, Cys424-Cys438, Cys486-Cys598, Cys534-Cys558, and Cys536-Cys553. Residue Asn533 is glycosylated (N-linked (GlcNAc...) asparagine; by host). Asn595 carries N-linked (GlcNAc...) asparagine; by host glycosylation. Residues 702–722 (AVVGMSLLALISIFASCYMLV) form a helical membrane-spanning segment. Cys718 carries the S-stearoyl cysteine; by host lipid modification. Residues 723–727 (AARSK) are interaction with the capsid protein. Topologically, residues 723 to 755 (AARSKCLTPYALTPGAAVPWTLGILCCAPRAHA) are cytoplasmic. Cys728 carries S-stearoyl cysteine; by host lipidation. The segment at 728–748 (CLTPYALTPGAAVPWTLGILC) is transient transmembrane before p62-6K protein processing. Cys728 and Cys749 are disulfide-bonded. S-palmitoyl cysteine; by host attachment occurs at residues Cys748 and Cys749. Topologically, residues 756 to 770 (ASVAETMAYLWDQNQ) are extracellular. The chain crosses the membrane as a helical span at residues 771 to 791 (ALFWLEFAAPVACILIITYCL). Residue Arg792 is a topological domain, cytoplasmic. The helical transmembrane segment at 793-813 (NVLCCCKSLSFLVLLSLGATA) threads the bilayer. Residues 814 to 1230 (RAYEHSTVMP…ALSWVQKISG (417 aa)) lie on the Extracellular side of the membrane. Cystine bridges form between Cys864–Cys929, Cys877–Cys909, Cys878–Cys911, and Cys883–Cys893. The tract at residues 899 to 916 (VYPFMWGGAYCFCDSENT) is E1 fusion peptide loop. 2 N-linked (GlcNAc...) asparagine; by host glycosylation sites follow: Asn956 and Asn1085. Intrachain disulfides connect Cys1074-Cys1086, Cys1116-Cys1191, Cys1121-Cys1195, and Cys1143-Cys1185. The tract at residues 1112 to 1192 (IDLTCTVATC…SLCSARATCS (81 aa)) is E1-DIII; interaction with host receptor VLDLR. The helical transmembrane segment at 1231–1251 (GLGAFAIGAILVLVVVTCIGL) threads the bilayer. The S-stearoyl cysteine; by host moiety is linked to residue Cys1248. Topologically, residues 1252–1253 (RR) are cytoplasmic.

As to quaternary structure, homodimer. Homomultimer. Interacts with host karyopherin KPNA4; this interaction allows the nuclear import of the viral capsid protein. Interacts with spike glycoprotein E2. Interacts with host IRAK1; the interaction leads to inhibition of IRAK1-dependent signaling. In terms of assembly, the precursor of protein E3/E2 and E1 form a heterodimer shortly after synthesis. The precursor of protein E3/E2 and E1 form a heterodimer shortly after synthesis. Processing of the precursor of protein E3/E2 into E2 and E3 results in a heterodimer of the spike glycoproteins E2 and E1. Spike at virion surface are constituted of a trimer of E2-E1 heterodimers. E2-E1 heterodimers interact with host VLDLR or LRP8/APOER2 to mediate viral entry. After target cell attachment and endocytosis, E1 change conformation to form homotrimers. Interacts with 6K protein. Interacts (via E1-DIII) with host VLDLR (via class A repeats); this interaction mediates viral entry into host cell. As to quaternary structure, interacts with spike glycoprotein E1. Processing of the precursor of protein E3/E2 into E2 and E3 results in a heterodimer of the spike glycoproteins E2 and E1. Spike at virion surface are constituted of a trimer of E2-E1 heterodimers. E2-E1 heterodimers interact with host VLDLR or LRP8/APOER2 to mediate viral entry. Interacts with 6K protein. In terms of assembly, oligomer. Interacts with spike glycoprotein E1. Interacts with spike glycoprotein E2. Specific enzymatic cleavages in vivo yield mature proteins. Capsid protein is auto-cleaved during polyprotein translation, unmasking a signal peptide at the N-terminus of the precursor of E3/E2. The remaining polyprotein is then targeted to the host endoplasmic reticulum, where host signal peptidase cleaves it into pE2, 6K and E1 proteins. pE2 is further processed to mature E3 and E2 by host furin in trans-Golgi vesicle. Protein processing process takes about 30 minutes at physiologic temperatures. The folding of the p62/6K/E1 precursor requires the formation of intrachain disulfide bonds and has been shown to involve a transient covalent interaction between the nascent and newly synthesized heterodimer and the host-cell chaperones, P4HB/PDI and PDIA3/ERp57. The folding pathway also includes non covalent interaction with human CANX/calnexin and CALR/calreticulin. In terms of processing, palmitoylated via thioester bonds. These palmitoylations may induce disruption of the C-terminus transmembrane. This would result in the reorientation of E2 C-terminus from lumenal to cytoplasmic side. Post-translationally, envelope E1, E2 and E3 proteins are N-glycosylated. Stearoylated. In terms of processing, palmitoylated via thioester bonds with about four covalently bound fatty acids per molecule.

It is found in the virion. The protein resides in the host cytoplasm. It localises to the host cell membrane. Its subcellular location is the host nucleus. The protein localises to the virion membrane. It is found in the host Golgi apparatus. The protein resides in the host trans-Golgi network. It localises to the host endoplasmic reticulum. It catalyses the reaction Autocatalytic release of the core protein from the N-terminus of the togavirus structural polyprotein by hydrolysis of a -Trp-|-Ser- bond.. Functionally, forms an icosahedral capsid with a T=4 symmetry composed of 240 copies of the capsid protein surrounded by a lipid membrane through which penetrate 80 spikes composed of trimers of E1-E2 heterodimers. The capsid protein binds to the viral RNA genome at a site adjacent to a ribosome binding site for viral genome translation following genome release. Possesses a protease activity that results in its autocatalytic cleavage from the nascent structural protein. Following its self-cleavage, the capsid protein transiently associates with ribosomes, and within several minutes the protein binds to viral RNA and rapidly assembles into icosahedric core particles. The resulting nucleocapsid eventually associates with the cytoplasmic domain of the spike glycoprotein E2 at the cell membrane, leading to budding and formation of mature virions. In case of infection, new virions attach to target cells and after clathrin-mediated endocytosis their membrane fuses with the host endosomal membrane. This leads to the release of the nucleocapsid into the cytoplasm, followed by an uncoating event necessary for the genomic RNA to become accessible. The uncoating might be triggered by the interaction of capsid proteins with ribosomes. Binding of ribosomes would release the genomic RNA since the same region is genomic RNA-binding and ribosome-binding. Specifically inhibits interleukin-1 receptor-associated kinase 1/IRAK1-dependent signaling during viral entry, representing a means by which the alphaviruses may evade innate immune detection and activation prior to viral gene expression. In terms of biological role, provides the signal sequence for the translocation of the precursor of protein E3/E2 to the host endoplasmic reticulum. Furin-cleaved E3 remains associated with spike glycoprotein E1 and mediates pH protection of the latter during the transport via the secretory pathway. After virion release from the host cell, the assembly protein E3 is gradually released in the extracellular space. Plays a role in viral attachment to target host cell, by binding to the cell receptors VLDLR or LRP8/APOER2. The host LDLR can act as a cell receptor for viral entry. Synthesized as a p62 precursor which is processed by furin at the cell membrane just before virion budding, giving rise to E2-E1 heterodimer. The p62-E1 heterodimer is stable, whereas E2-E1 is unstable and dissociate at low pH. p62 is processed at the last step, presumably to avoid E1 fusion activation before its final export to cell surface. E2 C-terminus contains a transitory transmembrane that would be disrupted by palmitoylation, resulting in reorientation of the C-terminal tail from lumenal to cytoplasmic side. This step is critical since E2 C-terminus is involved in budding by interacting with capsid proteins. This release of E2 C-terminus in cytoplasm occurs lately in protein export, and precludes premature assembly of particles at the endoplasmic reticulum membrane. Its function is as follows. Acts as a viroporin that participates in virus glycoprotein processing and transport to the plasma membrane, cell permeabilization and budding of viral particles. Disrupts the calcium homeostasis of the cell, probably at the endoplasmic reticulum level. This leads to cytoplasmic calcium elevation. Because of its lipophilic properties, the 6K protein is postulated to influence the selection of lipids that interact with the transmembrane domains of the glycoproteins, which, in turn, affects the deformability of the bilayer required for the extreme curvature that occurs as budding proceeds. Present in low amount in virions, about 3% compared to viral glycoproteins. Functionally, class II viral fusion protein. Fusion activity is inactive as long as E1 is bound to E2 in mature virion. After virus attachment to target cell via host VLDLR or LRP8/APOER2 and endocytosis, acidification of the endosome induces dissociation of E1/E2 heterodimer and concomitant trimerization of the E1 subunits. This E1 trimer is fusion active, and promotes release of viral nucleocapsid in cytoplasm after endosome and viral membrane fusion. Efficient fusion requires the presence of cholesterol and sphingolipid in the target membrane. Fusion is optimal at levels of about 1 molecule of cholesterol per 2 molecules of phospholipids, and is specific for sterols containing a 3-beta-hydroxyl group. This is Structural polyprotein from Aedes (Middle-African hedgehog).